Here is a 650-residue protein sequence, read N- to C-terminus: Acetyl-coenzyme A synthetase (650 aa).

Residues 191-194 (RGGR), threonine 311, and asparagine 335 each bind CoA. ATP is bound by residues 387–389 (GEP), 411–416 (DTWWQT), aspartate 500, and arginine 515. Serine 523 is a CoA binding site. Arginine 526 serves as a coordination point for ATP. 3 residues coordinate Mg(2+): valine 537, histidine 539, and valine 542. Arginine 584 is a CoA binding site. Position 609 is an N6-acetyllysine (lysine 609).

Belongs to the ATP-dependent AMP-binding enzyme family. Requires Mg(2+) as cofactor. Acetylated. Deacetylation by the SIR2-homolog deacetylase activates the enzyme.

The enzyme catalyses acetate + ATP + CoA = acetyl-CoA + AMP + diphosphate. In terms of biological role, catalyzes the conversion of acetate into acetyl-CoA (AcCoA), an essential intermediate at the junction of anabolic and catabolic pathways. AcsA undergoes a two-step reaction. In the first half reaction, AcsA combines acetate with ATP to form acetyl-adenylate (AcAMP) intermediate. In the second half reaction, it can then transfer the acetyl group from AcAMP to the sulfhydryl group of CoA, forming the product AcCoA. In Shewanella baltica (strain OS155 / ATCC BAA-1091), this protein is Acetyl-coenzyme A synthetase.